The following is a 178-amino-acid chain: Probable chorismate pyruvate-lyase (178 aa).

Substrate is bound by residues arginine 67, leucine 105, and glutamate 164.

This sequence belongs to the UbiC family.

It is found in the cytoplasm. The catalysed reaction is chorismate = 4-hydroxybenzoate + pyruvate. It participates in cofactor biosynthesis; ubiquinone biosynthesis. In terms of biological role, removes the pyruvyl group from chorismate, with concomitant aromatization of the ring, to provide 4-hydroxybenzoate (4HB) for the ubiquinone pathway. In Methylobacillus flagellatus (strain ATCC 51484 / DSM 6875 / VKM B-1610 / KT), this protein is Probable chorismate pyruvate-lyase.